The following is a 93-amino-acid chain: Large ribosomal subunit protein uL23cz/uL23cy (93 aa).

The protein belongs to the universal ribosomal protein uL23 family. In terms of assembly, part of the 50S ribosomal subunit.

The protein localises to the plastid. The protein resides in the chloroplast. In terms of biological role, binds to 23S rRNA. The chain is Large ribosomal subunit protein uL23cz/uL23cy (rpl23-A) from Oryza nivara (Indian wild rice).